The sequence spans 120 residues: uncharacterized protein (120 aa).

The next 4 membrane-spanning stretches (helical) occupy residues 9–29 (WPDF…LFCG), 32–52 (ALMF…ADCL), 68–88 (FVWP…VMAT), and 94–114 (GPEH…SFRF).

Its subcellular location is the membrane. This is an uncharacterized protein from Escherichia phage Mu (Bacteriophage Mu).